A 160-amino-acid chain; its full sequence is Ribosomal RNA large subunit methyltransferase H (160 aa).

S-adenosyl-L-methionine-binding positions include Gly108 and 127-132 (FGLMTW).

It belongs to the RNA methyltransferase RlmH family. Homodimer.

The protein localises to the cytoplasm. The enzyme catalyses pseudouridine(1915) in 23S rRNA + S-adenosyl-L-methionine = N(3)-methylpseudouridine(1915) in 23S rRNA + S-adenosyl-L-homocysteine + H(+). Functionally, specifically methylates the pseudouridine at position 1915 (m3Psi1915) in 23S rRNA. This is Ribosomal RNA large subunit methyltransferase H from Bartonella bacilliformis (strain ATCC 35685 / KC583 / Herrer 020/F12,63).